Consider the following 620-residue polypeptide: E3 ubiquitin-protein ligase DTX1 (620 aa).

WWE domains lie at 14–94 and 95–171; these read GLGF…PVRR and NFYD…RLRR. 3 disordered regions span residues 221-248, 262-313, and 361-391; these read SQRRKAPPAPPLPPPPPPGGPPGALAVR, PAAG…SIPP, and PPVSKSDVKPVPGVPGVCRKTKKKHLKKSKN. 2 stretches are compositionally biased toward pro residues: residues 227–241 and 268–280; these read PPAPPLPPPPPPGGP and EPAPPPGAPPRSP. The SH3-binding motif lies at 230–233; the sequence is PPLP. Positions 291-307 are enriched in polar residues; that stretch reads QNNLNRPGPQRTTSVSA. Residues 379 to 389 are compositionally biased toward basic residues; sequence RKTKKKHLKKS. An RING-type zinc finger spans residues 411-472; that stretch reads CTICMERLVT…DGSLQCPTCK (62 aa).

Belongs to the Deltex family. As to quaternary structure, homodimer. May form a heterodimer with other members of the Deltex family. Interacts with NOTCH1 via its N-terminal region and EIF3F, the interaction is required for NOTCH1 deubiquitination. Interacts with EP300. Forms a heterodimer with BBAP; the heterodimerization leading to an increase of in vitro ubiquitin ligase activity. Interacts with ITCH. In terms of processing, ubiquitinated; undergoes 'Lys-29'-linked polyubiquitination catalyzed by ITCH. Widely expressed. Strongly expressed in blood vessel. Also expressed in embryonic nervous system, pancreas, lung, adrenal gland, digestive tube and muscles. Expressed in MZB cells and developing B- and T-cells.

Its subcellular location is the cytoplasm. The protein resides in the nucleus. The enzyme catalyses S-ubiquitinyl-[E2 ubiquitin-conjugating enzyme]-L-cysteine + [acceptor protein]-L-lysine = [E2 ubiquitin-conjugating enzyme]-L-cysteine + N(6)-ubiquitinyl-[acceptor protein]-L-lysine.. Its pathway is protein modification; protein ubiquitination. Its function is as follows. Functions as a ubiquitin ligase protein in vivo, mediating ubiquitination and promoting degradation of MEKK1, suggesting that it may regulate the Notch pathway via some ubiquitin ligase activity. Regulator of Notch signaling, a signaling pathway involved in cell-cell communications that regulates a broad spectrum of cell-fate determinations. Mainly acts as a positive regulator of Notch, but it also acts as a negative regulator, depending on the developmental and cell context. Mediates the antineural activity of Notch, possibly by inhibiting the transcriptional activation mediated by MATCH1. Involved in neurogenesis, lymphogenesis and myogenesis, and may also be involved in MZB (Marginal zone B) cell differentiation. Promotes B-cell development at the expense of T-cell development, suggesting that it can antagonize NOTCH1. This Homo sapiens (Human) protein is E3 ubiquitin-protein ligase DTX1 (DTX1).